A 743-amino-acid polypeptide reads, in one-letter code: Serine-rich coiled-coil domain-containing protein 1 (743 aa).

Disordered regions lie at residues 1 to 125 and 156 to 175; these read MGDS…SRNK and KSEG…SVKQ. The segment covering 29–56 has biased composition (low complexity); that stretch reads LPSSPSSSNTVGVHSSSPSSTNSSSGST. The span at 81–102 shows a compositional bias: polar residues; it reads EPTNQNLSISNGAQPGQSSMQK. Positions 672–713 form a coiled coil; sequence MKDECSMLKLQLKEKDELISQLQEELEKVQHLQKAFASRVDK.

This sequence belongs to the CCSER family.

This Bos taurus (Bovine) protein is Serine-rich coiled-coil domain-containing protein 1 (CCSER1).